A 295-amino-acid chain; its full sequence is ATP synthase gamma chain (295 aa).

The protein belongs to the ATPase gamma chain family. In terms of assembly, F-type ATPases have 2 components, CF(1) - the catalytic core - and CF(0) - the membrane proton channel. CF(1) has five subunits: alpha(3), beta(3), gamma(1), delta(1), epsilon(1). CF(0) has three main subunits: a, b and c.

It is found in the cell inner membrane. In terms of biological role, produces ATP from ADP in the presence of a proton gradient across the membrane. The gamma chain is believed to be important in regulating ATPase activity and the flow of protons through the CF(0) complex. This Methylorubrum populi (strain ATCC BAA-705 / NCIMB 13946 / BJ001) (Methylobacterium populi) protein is ATP synthase gamma chain.